Consider the following 178-residue polypeptide: Caveolin-1 (178 aa).

Serine 2 carries the post-translational modification N-acetylserine. A Phosphoserine modification is found at serine 2. The interval serine 2 to valine 94 is required for homooligomerization. The Cytoplasmic segment spans residues serine 2 to serine 104. Lysine 5 is subject to N6-acetyllysine; alternate. Residue lysine 5 forms a Glycyl lysine isopeptide (Lys-Gly) (interchain with G-Cter in ubiquitin); alternate linkage. Tyrosine 6 bears the Phosphotyrosine mark. Serine 9 is modified (phosphoserine). A Phosphotyrosine; by ABL1 modification is found at tyrosine 14. Phosphotyrosine is present on tyrosine 25. Residues lysine 26, lysine 30, lysine 39, lysine 47, and lysine 57 each participate in a glycyl lysine isopeptide (Lys-Gly) (interchain with G-Cter in ubiquitin) cross-link. The interval aspartate 82–valine 94 is interaction with CAVIN3. Residues alanine 105–leucine 125 constitute an intramembrane region (helical). Topologically, residues histidine 126–isoleucine 178 are cytoplasmic. The tract at residues valine 131–glutamine 142 is interacts with SPRY1, SPRY2, SPRY3 and SPRY4. S-palmitoyl cysteine attachment occurs at residues cysteine 133, cysteine 143, and cysteine 156. The segment at serine 149–phenylalanine 160 is interacts with SPRY1, SPRY2, and SPRY4. Residues phenylalanine 167–isoleucine 178 form an interacts with SPRY1, SPRY2, SPRY3 and SPRY4 region.

The protein belongs to the caveolin family. As to quaternary structure, homooligomer. Interacts with GLIPR2. Interacts with NOSTRIN. Interacts with SNAP25 and STX1A. Interacts (via the N-terminus) with DPP4; the interaction is direct. Interacts with CTNNB1, CDH1 and JUP. Interacts with PACSIN2; this interaction induces membrane tubulation. Interacts with SLC7A9. Interacts with BMX and BTK. Interacts with TGFBR1. Interacts with CAVIN3 (via leucine-zipper domain) in a cholesterol-sensitive manner. Interacts with CAVIN1. Interacts with EHD2 in a cholesterol-dependent manner. Forms a ternary complex with UBXN6 and VCP; mediates CAV1 targeting to lysosomes for degradation. Interacts with ABCG1; this interaction regulates ABCG1-mediated cholesterol efflux. Interacts with NEU3; this interaction enhances NEU3 sialidase activity within caveola. Interacts (via C-terminus) with SPRY1, SPRY2 (via C-terminus), SPRY3, and SPRY4. Interacts with IGFBP5; this interaction allows trafficking of IGFBP5 from the plasma membrane to the nucleus. Post-translationally, phosphorylated at Tyr-14 by ABL1 in response to oxidative stress. In terms of processing, ubiquitinated. Undergo monoubiquitination and multi- and/or polyubiquitination. Monoubiquitination of N-terminal lysines promotes integration in a ternary complex with UBXN6 and VCP which promotes oligomeric CAV1 targeting to lysosomes for degradation. Ubiquitinated by ZNRF1; leading to degradation and modulation of the TLR4-mediated immune response.

Its subcellular location is the golgi apparatus membrane. It is found in the cell membrane. The protein resides in the membrane. The protein localises to the caveola. It localises to the membrane raft. In terms of biological role, may act as a scaffolding protein within caveolar membranes. Forms a stable heterooligomeric complex with CAV2 that targets to lipid rafts and drives caveolae formation. Mediates the recruitment of CAVIN proteins (CAVIN1/2/3/4) to the caveolae. Interacts directly with G-protein alpha subunits and can functionally regulate their activity. Involved in the costimulatory signal essential for T-cell receptor (TCR)-mediated T-cell activation. Its binding to DPP4 induces T-cell proliferation and NF-kappa-B activation in a T-cell receptor/CD3-dependent manner. Recruits CTNNB1 to caveolar membranes and may regulate CTNNB1-mediated signaling through the Wnt pathway. Negatively regulates TGFB1-mediated activation of SMAD2/3 by mediating the internalization of TGFBR1 from membrane rafts leading to its subsequent degradation. Binds 20(S)-hydroxycholesterol (20(S)-OHC). This is Caveolin-1 (CAV1) from Muntiacus reevesi (Reeves' muntjac).